Reading from the N-terminus, the 1960-residue chain is [F-actin]-monooxygenase MICAL3 (1960 aa).

The interval 2-494 is monooxygenase domain; sequence EESKNEATNR…RHLYDTGDTK (493 aa). Residues cysteine 97, 116–118, 123–125, phenylalanine 183, tyrosine 298, and aspartate 398 each bind FAD; these read EKR and RNN. Residues 518 to 624 form the Calponin-homology (CH) domain; it reads VARSSKLLGW…YLTQFYEMFK (107 aa). Residue serine 649 is modified to Phosphoserine. A disordered region spans residues 658–704; the sequence is GQTISRKRSPKDKKEKDLDGAGKRRKTSQSEEEDTPRGHRGARPTLV. Over residues 669–679 the composition is skewed to basic and acidic residues; that stretch reads DKKEKDLDGAG. Residues serine 685 and serine 687 each carry the phosphoserine modification. The LIM zinc-binding domain maps to 762–824; the sequence is DTCYFCQKRV…KPHYCYRLSG (63 aa). The Zn(2+) site is built by cysteine 764, cysteine 767, histidine 785, cysteine 788, cysteine 791, cysteine 794, cysteine 814, and histidine 817. Disordered regions lie at residues 826–887 and 906–1295; these read AQRK…LRGT and LEEV…EALK. Phosphothreonine is present on threonine 887. Serine 971 carries the phosphoserine modification. A compositionally biased stretch (acidic residues) spans 984–1014; the sequence is GEEEEEDEEDEEEEEEEEDEEDEEEDEDESS. 2 stretches are compositionally biased toward basic and acidic residues: residues 1039-1051 and 1072-1084; these read HWTHIRESQEERA and DVDSEPAEIKGEA. Phosphoserine occurs at positions 1129, 1139, 1156, and 1188. Pro residues-rich tracts occupy residues 1192–1203 and 1217–1233; these read SPLPEPSTPPAE and RTPPSPASPQRPSPPTQ. Serine 1250 bears the Phosphoserine mark. Phosphothreonine is present on threonine 1252. A phosphoserine mark is found at serine 1254, serine 1286, and serine 1313. Positions 1277–1286 are enriched in polar residues; sequence QGVTKDTLGS. 2 disordered regions span residues 1316-1550 and 1564-1782; these read LTPV…KRGL and RMRA…EEEL. Residue threonine 1317 is modified to Phosphothreonine. Residues 1379–1393 are compositionally biased toward basic and acidic residues; it reads PDREPKGPREEHRDL. Residues 1394–1406 show a composition bias toward low complexity; it reads SSSSGLGLQGSSS. Serine 1404 is subject to Phosphoserine. Residues 1407-1425 show a composition bias toward polar residues; sequence RTRTPGSQSFNTSDSTMLT. Threonine 1425 is subject to Phosphothreonine. A compositionally biased stretch (acidic residues) spans 1485 to 1503; that stretch reads SVDEIPFADDVEDTYDDNT. The segment covering 1594–1611 has biased composition (low complexity); the sequence is AAAAPRTPRTPAPRRATA. A compositionally biased stretch (basic and acidic residues) spans 1616-1627; that stretch reads GPEEPAPRHEAT. A compositionally biased stretch (low complexity) spans 1633 to 1653; that stretch reads SPPSDSGGPDGSVTSSEGSSG. Residues 1654-1672 are compositionally biased toward basic residues; it reads KSKKRSSLFSPRRSKKEKK. Serine 1660 and serine 1663 each carry phosphoserine. Over residues 1718-1727 the composition is skewed to polar residues; sequence CPSTPSSGTT. The segment covering 1762 to 1778 has biased composition (basic and acidic residues); it reads VLERTSQKSRKEPRTYT. Positions 1779-1952 form a coiled coil; the sequence is EEELNAKLTR…DKDLEAAMLS (174 aa). In terms of domain architecture, bMERB spans 1799–1948; the sequence is KQEELKRLHR…EKEEDKDLEA (150 aa). Serine 1870 is subject to Phosphoserine.

Belongs to the Mical family. In terms of assembly, interacts with RAB1B, RAB8A, RAB10, RAB13 and RAB15 (in their GTP-bound forms); binding to RAB1B is of low affinity compared to other Rab proteins; at least in case of RAB8A can bind 2 molecules of RAB8A simultaneously through a high and a low affinity binding site, respectively. Interacts with ERC1 and RAB8A; may bridge ERC1 with RAB8A. Interacts with KIF23 and ERC1; enhances the interaction between KIF23 and ERC1. Interacts with NINL. FAD is required as a cofactor.

It is found in the cytoplasm. The protein resides in the cell cortex. The protein localises to the cytoskeleton. It localises to the nucleus. Its subcellular location is the midbody. It is found in the spindle. The protein resides in the cilium basal body. It carries out the reaction L-methionyl-[F-actin] + NADPH + O2 + H(+) = L-methionyl-(R)-S-oxide-[F-actin] + NADP(+) + H2O. Its function is as follows. Monooxygenase that promotes depolymerization of F-actin by mediating oxidation of specific methionine residues on actin to form methionine-sulfoxide, resulting in actin filament disassembly and preventing repolymerization. In the absence of actin, it also functions as a NADPH oxidase producing H(2)O(2). Seems to act as Rab effector protein and play a role in vesicle trafficking. Involved in exocytic vesicles tethering and fusion: the monooxygenase activity is required for this process and implicates RAB8A associated with exocytotic vesicles. Required for cytokinesis. Contributes to stabilization and/or maturation of the intercellular bridge independently of its monooxygenase activity. Promotes recruitment of Rab8 and ERC1 to the intercellular bridge, and together these proteins are proposed to function in timely abscission. The sequence is that of [F-actin]-monooxygenase MICAL3 (MICAL3) from Bos taurus (Bovine).